Reading from the N-terminus, the 450-residue chain is Zinc finger protein 446 (450 aa).

Residues 26-108 (RLRFRGFCYQ…ALVEGLQHDP (83 aa)) form the SCAN box domain. Lys130 participates in a covalent cross-link: Glycyl lysine isopeptide (Lys-Gly) (interchain with G-Cter in SUMO2). Disordered regions lie at residues 130–155 (KTEE…QDTR) and 168–205 (EEPN…SFHP). Position 137 is a phosphoserine (Ser137). One can recognise a KRAB domain in the interval 208-254 (IQEEWGLLDRSQKELYWDAMLEKYGTVVSLGLPPHQPEAQAQSELGM). Ser218 is subject to Phosphoserine. 2 disordered regions span residues 263–331 (RSLR…PRKP) and 354–389 (HTSG…RRSL). Pro residues predominate over residues 275–286 (PGCPEAQPPQGP). Positions 287–306 (GPAAWEGLSGAATPAPTVRP) are enriched in low complexity. Thr308 carries the post-translational modification Phosphothreonine. Lys330 is covalently cross-linked (Glycyl lysine isopeptide (Lys-Gly) (interchain with G-Cter in SUMO2)). 3 consecutive C2H2-type zinc fingers follow at residues 332-359 (YTCE…SGPG), 395-422 (YPCE…GQRR), and 423-450 (HFCS…PEVP).

This sequence belongs to the krueppel C2H2-type zinc-finger protein family.

The protein localises to the nucleus. Functionally, may be involved in transcriptional regulation. In Homo sapiens (Human), this protein is Zinc finger protein 446 (ZNF446).